A 350-amino-acid chain; its full sequence is Small ribosomal subunit biogenesis GTPase RsgA (350 aa).

Residues Met-1–Asn-17 show a composition bias toward polar residues. Residues Met-1–Leu-35 are disordered. The CP-type G domain maps to Thr-103–Phe-273. Residues Asn-159 to Asp-162 and Gly-213 to Ser-221 each bind GTP. Residues Cys-297, Cys-302, His-304, and Cys-310 each coordinate Zn(2+).

Belongs to the TRAFAC class YlqF/YawG GTPase family. RsgA subfamily. In terms of assembly, monomer. Associates with 30S ribosomal subunit, binds 16S rRNA. It depends on Zn(2+) as a cofactor.

Its subcellular location is the cytoplasm. Its function is as follows. One of several proteins that assist in the late maturation steps of the functional core of the 30S ribosomal subunit. Helps release RbfA from mature subunits. May play a role in the assembly of ribosomal proteins into the subunit. Circularly permuted GTPase that catalyzes slow GTP hydrolysis, GTPase activity is stimulated by the 30S ribosomal subunit. The chain is Small ribosomal subunit biogenesis GTPase RsgA from Yersinia pseudotuberculosis serotype O:1b (strain IP 31758).